A 257-amino-acid polypeptide reads, in one-letter code: Zinc-finger homeodomain protein 6 (257 aa).

The tract at residues 1-35 is disordered; it reads MEFRGHDEPVDEMGVAYGRTPPSSSSSPAASASAG. Residues 21–35 show a composition bias toward low complexity; the sequence is PPSSSSSPAASASAG. The ZF-HD dimerization-type; degenerate zinc finger occupies 45–93; the sequence is YHECLRNHAAAMGGHVVDGCGEFMPMPGDAADALKCAACGCHRSFHRKD. Residues 106–125 are compositionally biased toward pro residues; it reads PSPPTPRVPLLMPPPQPQPH. 2 disordered regions span residues 106 to 182 and 228 to 257; these read PSPP…TKFT and NNKSSIGSSSGGGSRRQPQEQQSQQQQQQQ. Residues 141-155 are compositionally biased toward low complexity; sequence YHHTPSGSGGTTTES. Residues 174 to 237 constitute a DNA-binding region (homeobox); the sequence is RKRFRTKFTP…NNKSSIGSSS (64 aa). Residues 242–257 show a composition bias toward low complexity; it reads RRQPQEQQSQQQQQQQ.

In terms of assembly, homo- and heterodimer with other ZFHD proteins.

The protein resides in the nucleus. Its function is as follows. Putative transcription factor. This is Zinc-finger homeodomain protein 6 (ZHD6) from Oryza sativa subsp. indica (Rice).